Reading from the N-terminus, the 537-residue chain is Extracellular exo-inulinase inuE (537 aa).

Positions 1 to 19 are cleaved as a signal peptide; the sequence is MARLLKAVTVCALAGIAHA. Residue aspartate 41 is part of the active site. N-linked (GlcNAc...) asparagine glycans are attached at residues asparagine 49, asparagine 67, asparagine 112, asparagine 300, asparagine 363, asparagine 398, asparagine 430, and asparagine 531.

Belongs to the glycosyl hydrolase 32 family.

The protein localises to the secreted. It catalyses the reaction Hydrolysis of terminal, non-reducing (2-&gt;1)- and (2-&gt;6)-linked beta-D-fructofuranose residues in fructans.. Its function is as follows. Exo-inulinase involved in utilization of the plant storage polymer inulin, consisting of fructooligosaccharides with a degree of polymerization (DP) value from 2 to 60. Splits off terminal fructose units successively from the non-reducing end of the inulin molecule, and also hydrolyze sucrose and raffinose. The chain is Extracellular exo-inulinase inuE (inuE) from Aspergillus niger (strain ATCC MYA-4892 / CBS 513.88 / FGSC A1513).